The primary structure comprises 375 residues: MNTSHLLALLLPKSPQGENRSKPLGTPYNFSEHCQDSVDVMVFIVTSYSIETVVGVLGNLCLMCVTVRQKEKANVTNLLIANLAFSDFLMCLLCQPLTAVYTIMDYWIFGETLCKMSAFIQCMSVTVSILSLVLVALERHQLIINPTGWKPSISQAYLGIVLIWVIACVLSLPFLANSILENVFHKNHSKALEFLADKVVCTESWPLAHHRTIYTTFLLLFQYCLPLGFILVCYARIYRRLQRQGRVFHKGTYSLRAGHMKQVNVVLVVMVVAFAVLWLPLHVFNSLEDWHHEAIPICHGNLIFLVCHLLAMASTCVNPFIYGFLNTNFKKEIKALVLTCQQSAPLEESEHLPLSTVHTEVSKGSLRLSGRSNPI.

The Extracellular segment spans residues 1-39 (MNTSHLLALLLPKSPQGENRSKPLGTPYNFSEHCQDSVD). N2, N19, and N29 each carry an N-linked (GlcNAc...) asparagine glycan. Residues 40–60 (VMVFIVTSYSIETVVGVLGNL) form a helical membrane-spanning segment. At 61 to 87 (CLMCVTVRQKEKANVTNLLIANLAFSD) the chain is on the cytoplasmic side. The chain crosses the membrane as a helical span at residues 88–108 (FLMCLLCQPLTAVYTIMDYWI). The Extracellular portion of the chain corresponds to 109 to 116 (FGETLCKM). A disulfide bond links C114 and C201. The helical transmembrane segment at 117–137 (SAFIQCMSVTVSILSLVLVAL) threads the bilayer. Residues 138 to 155 (ERHQLIINPTGWKPSISQ) lie on the Cytoplasmic side of the membrane. Residues 156 to 176 (AYLGIVLIWVIACVLSLPFLA) traverse the membrane as a helical segment. Residues 177–212 (NSILENVFHKNHSKALEFLADKVVCTESWPLAHHRT) lie on the Extracellular side of the membrane. Residue N187 is glycosylated (N-linked (GlcNAc...) asparagine). Residues 213–233 (IYTTFLLLFQYCLPLGFILVC) traverse the membrane as a helical segment. Residues 234-263 (YARIYRRLQRQGRVFHKGTYSLRAGHMKQV) lie on the Cytoplasmic side of the membrane. A helical transmembrane segment spans residues 264–284 (NVVLVVMVVAFAVLWLPLHVF). Topologically, residues 285-301 (NSLEDWHHEAIPICHGN) are extracellular. The helical transmembrane segment at 302 to 322 (LIFLVCHLLAMASTCVNPFIY) threads the bilayer. The Cytoplasmic portion of the chain corresponds to 323-375 (GFLNTNFKKEIKALVLTCQQSAPLEESEHLPLSTVHTEVSKGSLRLSGRSNPI). Residue C340 is the site of S-palmitoyl cysteine attachment.

This sequence belongs to the G-protein coupled receptor 1 family.

The protein resides in the cell membrane. G protein-coupled receptor for PPY/pancreatic polypeptide/PP, NPY/neuropeptide Y and PYY/peptide YY that is negatively coupled to cAMP. The rank order of affinity for these polypeptides and their derivatives is PP, PP (2-36) and [Ile-31, Gln-34] PP &gt; [Pro-34] PYY &gt; PYY and [Leu-31, Pro-34] NPY &gt; NPY &gt; PYY (3-36) and NPY (2-36) &gt; PP (13-36) &gt; PP (31-36) &gt; NPY free acid. This Homo sapiens (Human) protein is Neuropeptide Y receptor type 4-2.